The sequence spans 401 residues: L-threonine ammonia-lyase (401 aa).

Position 51 is an N6-(pyridoxal phosphate)lysine (Lys51). Residues Asn78, 178 to 181 (GGGL), and Ser301 each bind pyridoxal 5'-phosphate. The ACT domain maps to 326-401 (FIETFVMDRP…AKGYEVRIVG (76 aa)).

It belongs to the serine/threonine dehydratase family. Homotetramer. Requires pyridoxal 5'-phosphate as cofactor.

The catalysed reaction is L-threonine = 2-oxobutanoate + NH4(+). The enzyme catalyses L-serine = pyruvate + NH4(+). The protein operates within amino-acid biosynthesis; L-isoleucine biosynthesis; 2-oxobutanoate from L-threonine: step 1/1. With respect to regulation, activity is insensitive to allosteric regulators L-valine and L-isoleucine at low concentrations, while these L-amino acids are inhibitors at high concentrations. Is insensitive to ammonium chloride and AMP. Inhibited in the presence of aminoxyacetic acid (AOAA), an inhibitor of pyridoxal phosphate-dependent enzymes. Its function is as follows. Catalyzes the conversion of L-threonine to 2-oxobutanoate and ammonia. Can also use L-serine, but the catalytic efficiency toward L-threonine is about sixfold higher than that toward L-serine. Also shows weak activity toward L-allo-threonine, but cannot use the corresponding D-amino acids. Does not exhibit racemase activity toward various amino acids, including serine. Physiologically, is likely involved in the threonine-dependent pathway of isoleucine biosynthesis. The protein is L-threonine ammonia-lyase of Thermotoga maritima (strain ATCC 43589 / DSM 3109 / JCM 10099 / NBRC 100826 / MSB8).